Reading from the N-terminus, the 426-residue chain is Serine hydroxymethyltransferase (426 aa).

(6S)-5,6,7,8-tetrahydrofolate-binding positions include Leu113 and 117–119; that span reads GHL. Lys222 carries the N6-(pyridoxal phosphate)lysine modification. 363 to 365 lines the (6S)-5,6,7,8-tetrahydrofolate pocket; that stretch reads SAF.

This sequence belongs to the SHMT family. As to quaternary structure, homodimer. Pyridoxal 5'-phosphate serves as cofactor.

Its subcellular location is the cytoplasm. The enzyme catalyses (6R)-5,10-methylene-5,6,7,8-tetrahydrofolate + glycine + H2O = (6S)-5,6,7,8-tetrahydrofolate + L-serine. It participates in one-carbon metabolism; tetrahydrofolate interconversion. The protein operates within amino-acid biosynthesis; glycine biosynthesis; glycine from L-serine: step 1/1. Functionally, catalyzes the reversible interconversion of serine and glycine with tetrahydrofolate (THF) serving as the one-carbon carrier. This reaction serves as the major source of one-carbon groups required for the biosynthesis of purines, thymidylate, methionine, and other important biomolecules. Also exhibits THF-independent aldolase activity toward beta-hydroxyamino acids, producing glycine and aldehydes, via a retro-aldol mechanism. This is Serine hydroxymethyltransferase from Phocaeicola vulgatus (strain ATCC 8482 / DSM 1447 / JCM 5826 / CCUG 4940 / NBRC 14291 / NCTC 11154) (Bacteroides vulgatus).